The sequence spans 383 residues: 1-deoxy-D-xylulose 5-phosphate reductoisomerase (383 aa).

NADPH contacts are provided by Thr-10, Gly-11, Ser-12, Ile-13, Asn-38, and Asn-121. Lys-122 is a binding site for 1-deoxy-D-xylulose 5-phosphate. Residue Glu-123 coordinates NADPH. Asp-147 contacts Mn(2+). Positions 148, 149, 172, and 195 each coordinate 1-deoxy-D-xylulose 5-phosphate. Position 149 (Glu-149) interacts with Mn(2+). An NADPH-binding site is contributed by Gly-201. Residues Ser-208, Asn-213, Lys-214, and Glu-217 each coordinate 1-deoxy-D-xylulose 5-phosphate. Residue Glu-217 participates in Mn(2+) binding.

It belongs to the DXR family. It depends on Mg(2+) as a cofactor. Requires Mn(2+) as cofactor.

It catalyses the reaction 2-C-methyl-D-erythritol 4-phosphate + NADP(+) = 1-deoxy-D-xylulose 5-phosphate + NADPH + H(+). It functions in the pathway isoprenoid biosynthesis; isopentenyl diphosphate biosynthesis via DXP pathway; isopentenyl diphosphate from 1-deoxy-D-xylulose 5-phosphate: step 1/6. Its function is as follows. Catalyzes the NADPH-dependent rearrangement and reduction of 1-deoxy-D-xylulose-5-phosphate (DXP) to 2-C-methyl-D-erythritol 4-phosphate (MEP). This chain is 1-deoxy-D-xylulose 5-phosphate reductoisomerase, found in Ruthia magnifica subsp. Calyptogena magnifica.